A 790-amino-acid chain; its full sequence is Nuclear cap-binding protein subunit 1 (790 aa).

Residues 1 to 26 (MSRRRHSDENDGGQPHKRRKTSDANE) form a disordered region. The Nuclear localization signal motif lies at 3-20 (RRRHSDENDGGQPHKRRK). At Ser-7 the chain carries Phosphoserine; by RPS6KB1. Position 21 is a phosphothreonine; by RPS6KB1 (Thr-21). Phosphoserine; by RPS6KB1 is present on Ser-22. Residues 28–240 (EDHLESLICK…CLWAQIQKLK (213 aa)) enclose the MIF4G domain. A Phosphoserine modification is found at Ser-201. Residue Lys-204 is modified to N6-acetyllysine. The stretch at 643-713 (STIRKMNKHV…SEQKNLFLVI (71 aa)) forms a coiled coil. A Glycyl lysine isopeptide (Lys-Gly) (interchain with G-Cter in SUMO2) cross-link involves residue Lys-684. N6-acetyllysine is present on Lys-698.

Belongs to the NCBP1 family. In terms of assembly, component of the nuclear cap-binding complex (CBC), a heterodimer composed of NCBP1/CBP80 and NCBP2/CBP20 that interacts with m7GpppG-capped RNA. Found in a U snRNA export complex containing PHAX/RNUXA, NCBP1/CBP80, NCBP2/CBP20, RAN, XPO1 and m7G-capped RNA. Identified in a IGF2BP1-dependent mRNP granule complex containing untranslated mRNAs. Interacts with PHAX/RNUXA, SRRT/ARS2, EIF4G2, IGF2BP1, HNRNPF, HNRNPH1, KIAA0427/CTIF, PARN, DROSHA, UPF1 and ALYREF/THOC4. May interact with EIF4G1; the interaction is however controversial since it is reported by PubMed:11340157, PubMed:15059963 and PubMed:15361857, but is not observed by PubMed:19648179. The large PER complex involved in the repression of transcriptional termination is composed of at least PER2, CDK9, DDX5, DHX9, NCBP1/CBP80 and POLR2A. Component of an alternative nuclear cap-binding complex (CBC) composed of NCBP1/CBP80 and NCBP3. Interacts with METTL3. Interacts with ZFC3H1 in a RNase-insensitive manner. Interacts with MTREX. Interacts with TASOR. Interacts with DHX34; the interaction is RNA-dependent. Interacts with KPNA3. Dephosphorylated at Thr-21 by the PNUTS-PP1 complex during RNA polymerase II transcription pause-release.

It localises to the nucleus. The protein localises to the cytoplasm. Its function is as follows. Component of the cap-binding complex (CBC), which binds cotranscriptionally to the 5'-cap of pre-mRNAs and is involved in various processes such as pre-mRNA splicing, translation regulation, nonsense-mediated mRNA decay, RNA-mediated gene silencing (RNAi) by microRNAs (miRNAs) and mRNA export. The CBC complex is involved in mRNA export from the nucleus via its interaction with ALYREF/THOC4/ALY, leading to the recruitment of the mRNA export machinery to the 5'-end of mRNA and to mRNA export in a 5' to 3' direction through the nuclear pore. The CBC complex is also involved in mediating U snRNA and intronless mRNAs export from the nucleus. The CBC complex is essential for a pioneer round of mRNA translation, before steady state translation when the CBC complex is replaced by cytoplasmic cap-binding protein eIF4E. The pioneer round of mRNA translation mediated by the CBC complex plays a central role in nonsense-mediated mRNA decay (NMD), NMD only taking place in mRNAs bound to the CBC complex, but not on eIF4E-bound mRNAs. The CBC complex enhances NMD in mRNAs containing at least one exon-junction complex (EJC) via its interaction with UPF1, promoting the interaction between UPF1 and UPF2. The CBC complex is also involved in 'failsafe' NMD, which is independent of the EJC complex, while it does not participate in Staufen-mediated mRNA decay (SMD). During cell proliferation, the CBC complex is also involved in microRNAs (miRNAs) biogenesis via its interaction with SRRT/ARS2 and is required for miRNA-mediated RNA interference. The CBC complex also acts as a negative regulator of PARN, thereby acting as an inhibitor of mRNA deadenylation. In the CBC complex, NCBP1/CBP80 does not bind directly capped RNAs (m7GpppG-capped RNA) but is required to stabilize the movement of the N-terminal loop of NCBP2/CBP20 and lock the CBC into a high affinity cap-binding state with the cap structure. Associates with NCBP3 to form an alternative cap-binding complex (CBC) which plays a key role in mRNA export and is particularly important in cellular stress situations such as virus infections. The conventional CBC with NCBP2 binds both small nuclear RNA (snRNA) and messenger (mRNA) and is involved in their export from the nucleus whereas the alternative CBC with NCBP3 does not bind snRNA and associates only with mRNA thereby playing a role only in mRNA export. NCBP1/CBP80 is required for cell growth and viability. The polypeptide is Nuclear cap-binding protein subunit 1 (NCBP1) (Homo sapiens (Human)).